Consider the following 361-residue polypeptide: uncharacterized protein (361 aa).

Disordered stretches follow at residues 53–75 and 150–211; these read KNIS…NINN and NYNN…YHHY. Positions 150-198 are enriched in low complexity; it reads NYNNYNNNNNNNNNNNNNNNNNNNNNNNNNNNNNNKNNNKNNNNKPNNF. Positions 199-211 are enriched in basic residues; the sequence is IHHHHHHHHYHHY. The helical transmembrane segment at 225 to 245 threads the bilayer; sequence IFIGLMAFLILFILMVIGLLI.

It is found in the membrane. This is an uncharacterized protein from Dictyostelium discoideum (Social amoeba).